Here is a 423-residue protein sequence, read N- to C-terminus: AP-1 complex subunit mu-1 (423 aa).

S2 carries the post-translational modification N-acetylserine. T152, T154, and T223 each carry phosphothreonine. The 254-residue stretch at K168–R421 folds into the MHD domain.

It belongs to the adaptor complexes medium subunit family. Adaptor protein complex 1 (AP-1) is a heterotetramer composed of two large adaptins (gamma-type subunit AP1G1 and beta-type subunit AP1B1), a medium adaptin (mu-type subunit AP1M1 or AP1M2) and a small adaptin (sigma-type subunit AP1S1 or AP1S2 or AP1S3). Interacts with MARCHF11. In terms of processing, phosphorylation of membrane-bound AP1M1/AP1M2 increases its affinity for sorting signals.

Its subcellular location is the golgi apparatus. The protein resides in the cytoplasmic vesicle. It is found in the clathrin-coated vesicle membrane. Its function is as follows. Subunit of clathrin-associated adaptor protein complex 1 that plays a role in protein sorting in the trans-Golgi network (TGN) and endosomes. The AP complexes mediate the recruitment of clathrin to membranes and the recognition of sorting signals within the cytosolic tails of transmembrane cargo molecules. The polypeptide is AP-1 complex subunit mu-1 (Ap1m1) (Mus musculus (Mouse)).